An 80-amino-acid polypeptide reads, in one-letter code: Putative antitoxin VapB44 (80 aa).

Positions 40–68 (NQNPQPAASQEDAFHGFEPLPHRGGAVSN) are disordered.

Functionally, possibly the antitoxin component of a type II toxin-antitoxin (TA) system. Its cognate toxin is VapC44 (Potential). This is Putative antitoxin VapB44 (vapB44) from Mycobacterium tuberculosis (strain CDC 1551 / Oshkosh).